The sequence spans 1401 residues: Lysine-specific demethylase 6A (1401 aa).

Positions 1–1095 are interaction with SUPT6H; the sequence is MKSCGVSLAT…TNIDLSDDKK (1095 aa). 8 TPR repeats span residues 95–128, 132–165, 169–203, 207–240, 245–285, 286–319, 321–353, and 355–387; these read SDFF…QSDY, AAFL…DPSF, KEIH…NPCT, AEIQ…ENLS, ATIL…DPNS, GQSW…SEAS, DTWC…DHGH, and AAWM…KNCS. Over residues 439–453 the composition is skewed to polar residues; the sequence is AMNTAQQNTSDNWSG. The disordered stretch occupies residues 439 to 463; it reads AMNTAQQNTSDNWSGGNAPPPVEQQ. 2 positions are modified to omega-N-methylarginine: Arg519 and Arg549. 3 stretches are compositionally biased toward polar residues: residues 596-606, 619-642, and 660-743; these read NHVTGSGSNGN, HNRT…STQG, and LSST…STAS. The tract at residues 596-745 is disordered; it reads NHVTGSGSNG…ETPNSTASVE (150 aa). Ser769 bears the Phosphoserine mark. 3 disordered regions span residues 795–863, 914–941, and 1043–1080; these read GTCD…EESQ, LLDK…PPTP, and FQES…GPFK. Over residues 814 to 833 the composition is skewed to low complexity; it reads SVASSPSSAISTATPSPKST. Thr827 is modified (phosphothreonine). Phosphoserine is present on Ser829. The span at 834-848 shows a compositional bias: polar residues; it reads EQTTTNSVTSLNSPH. Residues 918–931 are compositionally biased toward pro residues; sequence CPPPRPPSSPYPPL. Residues 1046-1063 are compositionally biased toward basic and acidic residues; sequence SLREENEKRSHHKDHSDS. Residues 1095-1258 form the JmjC domain; sequence KWKLQLHELT…YKLAVERYEW (164 aa). The Fe cation site is built by His1146, Glu1148, and His1226. Residues Cys1331, Cys1334, Cys1358, and Cys1361 each contribute to the Zn(2+) site.

This sequence belongs to the UTX family. In terms of assembly, component of the MLL2/3 complex (also named ASCOM complex), at least composed of KMT2D/MLL2 or KMT2C/MLL3, ASH2L, RBBP5, WDR5, NCOA6, DPY30, KDM6A (or KDM6B), PAXIP1/PTIP, PAGR1 and alpha- and beta-tubulin. Interacts with TLE1. Interacts with SUPT6H. Interacts with SMARCA4. Interacts with PROSER1. L-ascorbate is required as a cofactor. The cofactor is Fe(2+). In terms of tissue distribution, expressed in brain, heart and spleen.

The protein resides in the nucleus. It carries out the reaction N(6),N(6),N(6)-trimethyl-L-lysyl(27)-[histone H3] + 2 2-oxoglutarate + 2 O2 = N(6)-methyl-L-lysyl(27)-[histone H3] + 2 formaldehyde + 2 succinate + 2 CO2. In terms of biological role, histone demethylase that specifically demethylates 'Lys-27' of histone H3, thereby playing a central role in histone code. Demethylates trimethylated and dimethylated but not monomethylated H3 'Lys-27'. Plays a central role in regulation of posterior development, by regulating HOX gene expression. Demethylation of 'Lys-27' of histone H3 is concomitant with methylation of 'Lys-4' of histone H3, and regulates the recruitment of the PRC1 complex and monoubiquitination of histone H2A. Plays a demethylase-independent role in chromatin remodeling to regulate T-box family member-dependent gene expression. This chain is Lysine-specific demethylase 6A (Kdm6a), found in Mus musculus (Mouse).